A 195-amino-acid chain; its full sequence is HTH-type transcriptional regulator BetI (195 aa).

An HTH tetR-type domain is found at 8-68 (SIRRRQLIDA…ATMRDITSQL (61 aa)). A DNA-binding region (H-T-H motif) is located at residues 31–50 (TIAQIARRAGVSTGIISHYF).

It participates in amine and polyamine biosynthesis; betaine biosynthesis via choline pathway [regulation]. Its function is as follows. Repressor involved in the biosynthesis of the osmoprotectant glycine betaine. It represses transcription of the choline transporter BetT and the genes of BetAB involved in the synthesis of glycine betaine. This Escherichia coli (strain SMS-3-5 / SECEC) protein is HTH-type transcriptional regulator BetI.